The sequence spans 163 residues: Photosystem II extrinsic protein V (163 aa).

A signal peptide spans 1–26 (MFRRLIGVVVATVLLTFQLIVGSATA). The heme c site is built by Cys-63, Cys-66, His-67, and His-118.

This sequence belongs to the cytochrome c family. PsbV subfamily. As to quaternary structure, PSII is composed of 1 copy each of membrane proteins PsbA, PsbB, PsbC, PsbD, PsbE, PsbF, PsbH, PsbI, PsbJ, PsbK, PsbL, PsbM, PsbT, PsbX, PsbY, PsbZ, Psb30/Ycf12, peripheral proteins PsbO, CyanoQ (PsbQ), PsbU, PsbV and a large number of cofactors. It forms dimeric complexes. Heme c serves as cofactor.

It localises to the cellular thylakoid membrane. Its function is as follows. One of the extrinsic, lumenal subunits of photosystem II (PSII). PSII is a light-driven water plastoquinone oxidoreductase, using light energy to abstract electrons from H(2)O, generating a proton gradient subsequently used for ATP formation. The extrinsic proteins stabilize the structure of photosystem II oxygen-evolving complex (OEC), the ion environment of oxygen evolution and protect the OEC against heat-induced inactivation. Low-potential cytochrome c that plays a role in the OEC of PSII. This Trichormus variabilis (strain ATCC 29413 / PCC 7937) (Anabaena variabilis) protein is Photosystem II extrinsic protein V.